Here is a 137-residue protein sequence, read N- to C-terminus: Nucleoside diphosphate kinase (137 aa).

Positions 9, 57, 85, 91, 102, and 112 each coordinate ATP. The Pros-phosphohistidine intermediate role is filled by His-115.

This sequence belongs to the NDK family. In terms of assembly, homotetramer. Mg(2+) is required as a cofactor.

The protein localises to the cytoplasm. The catalysed reaction is a 2'-deoxyribonucleoside 5'-diphosphate + ATP = a 2'-deoxyribonucleoside 5'-triphosphate + ADP. It catalyses the reaction a ribonucleoside 5'-diphosphate + ATP = a ribonucleoside 5'-triphosphate + ADP. Major role in the synthesis of nucleoside triphosphates other than ATP. The ATP gamma phosphate is transferred to the NDP beta phosphate via a ping-pong mechanism, using a phosphorylated active-site intermediate. This Geobacter sp. (strain M21) protein is Nucleoside diphosphate kinase.